We begin with the raw amino-acid sequence, 90 residues long: uncharacterized protein (90 aa).

The helical transmembrane segment at 15 to 34 threads the bilayer; it reads HVLAISTFIATAAVASYFTT. The interval 34 to 65 is disordered; that stretch reads TKPKTKNEGKNSSALSQQKSGESSNSDAMGKD. Polar residues predominate over residues 43 to 60; it reads KNSSALSQQKSGESSNSD. N-linked (GlcNAc...) asparagine glycosylation is present at Asn-44.

The protein resides in the mitochondrion membrane. This is an uncharacterized protein from Saccharomyces cerevisiae (strain ATCC 204508 / S288c) (Baker's yeast).